The following is a 313-amino-acid chain: Minor outer capsid protein P9 (313 aa).

Belongs to the phytoreovirus minor outer capsid protein P9 family.

It localises to the virion. Its subcellular location is the host cytoplasm. In terms of biological role, minor outer capsid protein. The polypeptide is Minor outer capsid protein P9 (Catharanthus roseus (Madagascar periwinkle)).